A 220-amino-acid polypeptide reads, in one-letter code: Orotate phosphoribosyltransferase (220 aa).

Lys-26 is a binding site for 5-phospho-alpha-D-ribose 1-diphosphate. 34 to 35 (FF) contributes to the orotate binding site. Residues 72–73 (YK), Arg-99, Lys-100, Lys-103, His-105, and 125–133 (DDVISAGTS) contribute to the 5-phospho-alpha-D-ribose 1-diphosphate site. Orotate-binding residues include Ser-129 and Arg-157.

The protein belongs to the purine/pyrimidine phosphoribosyltransferase family. PyrE subfamily. In terms of assembly, homodimer. Mg(2+) is required as a cofactor.

The enzyme catalyses orotidine 5'-phosphate + diphosphate = orotate + 5-phospho-alpha-D-ribose 1-diphosphate. It participates in pyrimidine metabolism; UMP biosynthesis via de novo pathway; UMP from orotate: step 1/2. Its function is as follows. Catalyzes the transfer of a ribosyl phosphate group from 5-phosphoribose 1-diphosphate to orotate, leading to the formation of orotidine monophosphate (OMP). This chain is Orotate phosphoribosyltransferase, found in Nitrosococcus oceani (strain ATCC 19707 / BCRC 17464 / JCM 30415 / NCIMB 11848 / C-107).